Here is a 255-residue protein sequence, read N- to C-terminus: MPEHTGFLTYLLAQLPGLRENARNIGKTFIGHHTVDYRGTEPIFMSLLIMVLFVLLASEVRGQYRRLNESVIPEDKLTLRTFFEAFFGYFYGMARDVMGPANAKRYFPLIGGSAAFIFFSNASALIPGVNPPTSNLNITIGCAVVVFVLFNYYGLKENGWSYVAHLAGPKWYLAPLIFPIEVISTCVRPVTLSIRLMLNIGVDHLVASIFLGLVALFVPVPLMFLAIIVIVVQTLVFCLLSCIYIGLATEKADHH.

The next 6 membrane-spanning stretches (helical) occupy residues 40–60 (TEPI…ASEV), 109–129 (LIGG…IPGV), 135–155 (NLNI…YYGL), 163–183 (VAHL…IEVI), 196–218 (LMLN…ALFV), and 230–250 (IVVQ…LATE).

This sequence belongs to the ATPase A chain family. As to quaternary structure, F-type ATPases have 2 components, CF(1) - the catalytic core - and CF(0) - the membrane proton channel. CF(1) has five subunits: alpha(3), beta(3), gamma(1), delta(1), epsilon(1). CF(0) has three main subunits: a(1), b(2) and c(9-12). The alpha and beta chains form an alternating ring which encloses part of the gamma chain. CF(1) is attached to CF(0) by a central stalk formed by the gamma and epsilon chains, while a peripheral stalk is formed by the delta and b chains.

It is found in the cell inner membrane. Key component of the proton channel; it plays a direct role in the translocation of protons across the membrane. The sequence is that of ATP synthase subunit a from Sorangium cellulosum (strain So ce56) (Polyangium cellulosum (strain So ce56)).